A 254-amino-acid polypeptide reads, in one-letter code: Geranylgeranylglyceryl phosphate synthase (254 aa).

Positions 27 and 56 each coordinate Mg(2+). Sn-glycerol 1-phosphate is bound by residues 174-180, 212-213, and 234-235; these read YLEAGSG, GG, and GT.

Belongs to the GGGP/HepGP synthase family. Group II subfamily. In terms of assembly, homohexamer. It depends on Mg(2+) as a cofactor.

It is found in the cytoplasm. It carries out the reaction sn-glycerol 1-phosphate + (2E,6E,10E)-geranylgeranyl diphosphate = sn-3-O-(geranylgeranyl)glycerol 1-phosphate + diphosphate. It participates in membrane lipid metabolism; glycerophospholipid metabolism. Prenyltransferase that catalyzes the transfer of the geranylgeranyl moiety of geranylgeranyl diphosphate (GGPP) to the C3 hydroxyl of sn-glycerol-1-phosphate (G1P). This reaction is the first ether-bond-formation step in the biosynthesis of archaeal membrane lipids. The polypeptide is Geranylgeranylglyceryl phosphate synthase (Aeropyrum pernix (strain ATCC 700893 / DSM 11879 / JCM 9820 / NBRC 100138 / K1)).